The sequence spans 310 residues: HTH-type transcriptional activator TtdR (310 aa).

The region spanning 6–63 is the HTH lysR-type domain; the sequence is PLAKDLQVLVEIVHSGSFSAAAATLGQTPAFVTKRIQILENTLATTLLNRSARGVALT. The H-T-H motif DNA-binding region spans 23-42; it reads FSAAAATLGQTPAFVTKRIQ.

This sequence belongs to the LysR transcriptional regulatory family.

Its function is as follows. Positive regulator required for L-tartrate-dependent anaerobic growth on glycerol. Induces expression of the ttdA-ttdB-ygjE operon. This Escherichia coli O6:H1 (strain CFT073 / ATCC 700928 / UPEC) protein is HTH-type transcriptional activator TtdR (ttdR).